A 217-amino-acid polypeptide reads, in one-letter code: Large ribosomal subunit protein uL29m (217 aa).

Belongs to the universal ribosomal protein uL29 family. Component of the mitochondrial large ribosomal subunit. Mature mitochondrial ribosomes consist of a small (37S) and a large (54S) subunit. The 37S subunit contains at least 33 different proteins and 1 molecule of RNA (15S). The 54S subunit contains at least 45 different proteins and 1 molecule of RNA (21S).

The protein localises to the mitochondrion. The chain is Large ribosomal subunit protein uL29m (mrpl4) from Neosartorya fischeri (strain ATCC 1020 / DSM 3700 / CBS 544.65 / FGSC A1164 / JCM 1740 / NRRL 181 / WB 181) (Aspergillus fischerianus).